An 824-amino-acid chain; its full sequence is Phenylalanine--tRNA ligase beta subunit (824 aa).

Residues 39–153 (SEQAKNVVIG…NIPPIGSNAV (115 aa)) form the tRNA-binding domain. A B5 domain is found at 414 to 507 (KKSISVNLRM…RLIGYDNFDS (94 aa)). Residues Asp485, Asp491, Glu494, and Glu495 each contribute to the Mg(2+) site. The 94-residue stretch at 730–823 (PTVPYMERDI…LKEKIKAELR (94 aa)) folds into the FDX-ACB domain.

The protein belongs to the phenylalanyl-tRNA synthetase beta subunit family. Type 1 subfamily. As to quaternary structure, tetramer of two alpha and two beta subunits. Mg(2+) is required as a cofactor.

It localises to the cytoplasm. It catalyses the reaction tRNA(Phe) + L-phenylalanine + ATP = L-phenylalanyl-tRNA(Phe) + AMP + diphosphate + H(+). In Prochlorococcus marinus (strain NATL2A), this protein is Phenylalanine--tRNA ligase beta subunit.